Here is a 262-residue protein sequence, read N- to C-terminus: Hemin import ATP-binding protein HmuV (262 aa).

Positions 5-242 (LEARKAGFAT…ELIGAVFDVE (238 aa)) constitute an ABC transporter domain. 37–44 (GPNGAGKS) provides a ligand contact to ATP.

This sequence belongs to the ABC transporter superfamily. Heme (hemin) importer (TC 3.A.1.14.5) family. In terms of assembly, the complex is composed of two ATP-binding proteins (HmuV), two transmembrane proteins (HmuU) and a solute-binding protein (HmuT).

It localises to the cell inner membrane. Functionally, part of the ABC transporter complex HmuTUV involved in hemin import. Responsible for energy coupling to the transport system. The polypeptide is Hemin import ATP-binding protein HmuV (Rhodopseudomonas palustris (strain HaA2)).